Consider the following 500-residue polypeptide: Abscisic acid 8'-hydroxylase 3 (500 aa).

A helical transmembrane segment spans residues 3-23 (ASFVIVIVISFFISLAFMCYV). A heme-binding site is contributed by C426.

The protein belongs to the cytochrome P450 family. Heme serves as cofactor.

The protein localises to the membrane. The catalysed reaction is 2-cis-(+)-abscisate + reduced [NADPH--hemoprotein reductase] + O2 = (+)-8'-hydroxyabscisate + oxidized [NADPH--hemoprotein reductase] + H2O + H(+). It participates in plant hormone degradation; abscisic acid degradation. In terms of biological role, involved in the oxidative degradation of abscisic acid. The protein is Abscisic acid 8'-hydroxylase 3 (CYP707A7) of Oryza sativa subsp. indica (Rice).